The primary structure comprises 434 residues: Histidinol dehydrogenase (434 aa).

The NAD(+) site is built by tyrosine 130, glutamine 191, and asparagine 214. Substrate contacts are provided by serine 237, glutamine 259, and histidine 262. Positions 259 and 262 each coordinate Zn(2+). Catalysis depends on proton acceptor residues glutamate 327 and histidine 328. Positions 328, 361, 415, and 420 each coordinate substrate. Residue aspartate 361 coordinates Zn(2+). Residue histidine 420 coordinates Zn(2+).

It belongs to the histidinol dehydrogenase family. It depends on Zn(2+) as a cofactor.

It carries out the reaction L-histidinol + 2 NAD(+) + H2O = L-histidine + 2 NADH + 3 H(+). It participates in amino-acid biosynthesis; L-histidine biosynthesis; L-histidine from 5-phospho-alpha-D-ribose 1-diphosphate: step 9/9. In terms of biological role, catalyzes the sequential NAD-dependent oxidations of L-histidinol to L-histidinaldehyde and then to L-histidine. In Chromobacterium violaceum (strain ATCC 12472 / DSM 30191 / JCM 1249 / CCUG 213 / NBRC 12614 / NCIMB 9131 / NCTC 9757 / MK), this protein is Histidinol dehydrogenase.